The sequence spans 481 residues: Aspartyl/glutamyl-tRNA(Asn/Gln) amidotransferase subunit B (481 aa).

Belongs to the GatB/GatE family. GatB subfamily. Heterotrimer of A, B and C subunits.

It carries out the reaction L-glutamyl-tRNA(Gln) + L-glutamine + ATP + H2O = L-glutaminyl-tRNA(Gln) + L-glutamate + ADP + phosphate + H(+). The enzyme catalyses L-aspartyl-tRNA(Asn) + L-glutamine + ATP + H2O = L-asparaginyl-tRNA(Asn) + L-glutamate + ADP + phosphate + 2 H(+). Allows the formation of correctly charged Asn-tRNA(Asn) or Gln-tRNA(Gln) through the transamidation of misacylated Asp-tRNA(Asn) or Glu-tRNA(Gln) in organisms which lack either or both of asparaginyl-tRNA or glutaminyl-tRNA synthetases. The reaction takes place in the presence of glutamine and ATP through an activated phospho-Asp-tRNA(Asn) or phospho-Glu-tRNA(Gln). This Pseudomonas paraeruginosa (strain DSM 24068 / PA7) (Pseudomonas aeruginosa (strain PA7)) protein is Aspartyl/glutamyl-tRNA(Asn/Gln) amidotransferase subunit B.